Consider the following 281-residue polypeptide: MSRISFDQLLEAGAHFGHLKRKWNPAMAPYIFMERNDIHIIDLHKTVAKVDEAAEVIKGMAKNGKKILFVATKKQAKEPIAELAKSVGMPYVVERWPGGMLTNFPTIRKAVKKMTQIDKMTADGTFDNLSKREKLQITRQRAKLEKTLGSIADMNRLPSALFVVDVMKEHIAVREANRLGIPVFAMVDTNSDPSLIDYVIPSNDDALKAIELIVGTMCQAINEGLMERKAEKPEEEETEEAAPRRERRARSGARRSRQNENEATAEAATEVAEAPEAEEAE.

Residues 225-281 (LMERKAEKPEEEETEEAAPRRERRARSGARRSRQNENEATAEAATEVAEAPEAEEAE) are disordered. Positions 245 to 256 (RERRARSGARRS) are enriched in basic residues. Over residues 262-272 (EATAEAATEVA) the composition is skewed to low complexity.

The protein belongs to the universal ribosomal protein uS2 family.

This chain is Small ribosomal subunit protein uS2, found in Porphyromonas gingivalis (strain ATCC 33277 / DSM 20709 / CIP 103683 / JCM 12257 / NCTC 11834 / 2561).